The sequence spans 676 residues: Lon-like protease BrxL (676 aa).

It belongs to the BrxL family.

In terms of biological role, BREX systems (bacteriophage exclusion) provide immunity against bacteriophage. Part of a type 1 BREX system. This system allows phage adsorption but prevents phage DNA replication, without degradation of the phage DNA. Methylation of bacterial DNA by PglX probably guides self/non-self discrimination. When the brxA-brxB-brxC-pglX and pglZ-brxL operons are transformed into a susceptible B.subtilis strain (BEST7003) they confer resistance to bacteriophages SPbeta, SP16, Zeta, phi3T and SP02 and partial protection to phages SP01 and SP82G (these include lytic and temperate phage). They do not protect against phages phi105, rho10 or rho14. Additionally confers a very slight reduction in efficiency of plasmid transformation. The chain is Lon-like protease BrxL from Bacillus cereus (strain H3081.97).